The sequence spans 284 residues: L-ribulose-5-phosphate 3-epimerase UlaE (284 aa).

It belongs to the L-ribulose-5-phosphate 3-epimerase family.

It carries out the reaction L-ribulose 5-phosphate = L-xylulose 5-phosphate. Its pathway is cofactor degradation; L-ascorbate degradation; D-xylulose 5-phosphate from L-ascorbate: step 3/4. Its function is as follows. Catalyzes the isomerization of L-xylulose-5-phosphate to L-ribulose-5-phosphate. Is involved in the anaerobic L-ascorbate utilization. The protein is L-ribulose-5-phosphate 3-epimerase UlaE of Escherichia coli (strain ATCC 8739 / DSM 1576 / NBRC 3972 / NCIMB 8545 / WDCM 00012 / Crooks).